A 74-amino-acid chain; its full sequence is Large ribosomal subunit protein bL27c (74 aa).

Belongs to the bacterial ribosomal protein bL27 family.

The protein resides in the plastid. It localises to the chloroplast. The protein is Large ribosomal subunit protein bL27c (rpl27) of Pleurochrysis haptonemofera (Unicellular marine alga).